The following is a 244-amino-acid chain: Gasdermin-like protein rcd-1-2 (244 aa).

The tract at residues 1–22 (MDNEEWFPLKQTHYPPPTIPSM) is disordered.

This sequence belongs to the gasdermin family. As to quaternary structure, heterooligomer; the heterooligomer with rcd-1-1 forms a ring-shaped pore complex when inserted in the membrane.

It is found in the cytoplasm. Its subcellular location is the cell membrane. Its function is as follows. Gasdermin-like protein involved in heterokaryon incompatibility, a process that ensures that during spontaneous vegetative cell fusion, only compatible cells from the same colony survive (non-self-recognition). In N.crassa, the rcd-1 locus exists as 2 incompatible alleles, rcd-1-1 (AC Q7SBA0) and rcd-1-2 (this entry). During the allorecognition process, forms a heterooligomer with rcd-1-1, thereby forming a functional gasdermin-like complex that binds to membranes and forms pores, triggering cell death. Binds negatively charged phospholipids, such as cardiolipin and phosphatidylserine. Also binds to phosphoinositides, preferentially to phosphatidylinositol-3-phosphate (PtdIns-3-P), PtdIns-5-P and PtdIns-3,5-P2. The sequence is that of Gasdermin-like protein rcd-1-2 from Neurospora crassa.